A 415-amino-acid chain; its full sequence is Serine hydroxymethyltransferase (415 aa).

(6S)-5,6,7,8-tetrahydrofolate-binding positions include leucine 121 and 125 to 127 (GHL). Lysine 230 carries the post-translational modification N6-(pyridoxal phosphate)lysine. Position 355–357 (355–357 (SPF)) interacts with (6S)-5,6,7,8-tetrahydrofolate.

The protein belongs to the SHMT family. Homodimer. Requires pyridoxal 5'-phosphate as cofactor.

The protein resides in the cytoplasm. The catalysed reaction is (6R)-5,10-methylene-5,6,7,8-tetrahydrofolate + glycine + H2O = (6S)-5,6,7,8-tetrahydrofolate + L-serine. Its pathway is one-carbon metabolism; tetrahydrofolate interconversion. The protein operates within amino-acid biosynthesis; glycine biosynthesis; glycine from L-serine: step 1/1. Catalyzes the reversible interconversion of serine and glycine with tetrahydrofolate (THF) serving as the one-carbon carrier. This reaction serves as the major source of one-carbon groups required for the biosynthesis of purines, thymidylate, methionine, and other important biomolecules. Also exhibits THF-independent aldolase activity toward beta-hydroxyamino acids, producing glycine and aldehydes, via a retro-aldol mechanism. This is Serine hydroxymethyltransferase from Lactococcus lactis subsp. cremoris (strain SK11).